The chain runs to 143 residues: Peptide methionine sulfoxide reductase MsrB (143 aa).

The MsrB domain maps to 16–139 (DAELRRRLTP…NSAALNFEAK (124 aa)). Residues cysteine 55, cysteine 58, cysteine 104, and cysteine 107 each contribute to the Zn(2+) site. Cysteine 128 acts as the Nucleophile in catalysis.

It belongs to the MsrB Met sulfoxide reductase family. It depends on Zn(2+) as a cofactor.

It catalyses the reaction L-methionyl-[protein] + [thioredoxin]-disulfide + H2O = L-methionyl-(R)-S-oxide-[protein] + [thioredoxin]-dithiol. This Burkholderia thailandensis (strain ATCC 700388 / DSM 13276 / CCUG 48851 / CIP 106301 / E264) protein is Peptide methionine sulfoxide reductase MsrB.